The sequence spans 83 residues: Hepcidin-2 (83 aa).

The signal sequence occupies residues 1–26; it reads MALSTRTQAACLLLLLLASLSSTTYL. A propeptide spanning residues 27–53 is cleaved from the precursor; the sequence is QQQMRQTTELQPLHGEESRADIAIPMQ. 4 disulfide bridges follow: C65–C81, C68–C71, C69–C77, and C72–C80.

It belongs to the hepcidin family. In terms of tissue distribution, highly expressed in the liver and to a much lesser extent in the heart. Also expressed in pancreas.

The protein localises to the secreted. Its function is as follows. Seems to act as a signaling molecule involved in the maintenance of iron homeostasis. In Mus musculus (Mouse), this protein is Hepcidin-2 (Hamp2).